The chain runs to 694 residues: MKHLKRWWSAGGGLLHLTLLLSLAGLRVDLDLYLLLPPPTLLQDELLFLGGPASSAYALSPFSASGGWGRAGHLHPKGRELDPAAPPEGQLLREVRALGVPFVPRTSVDAWLVHSVAAGSADEAHGLLGAAAASSTGGAGASVDGGSQAVQGGGGDPRAARSGPLDAGEEEKAPAEPTAQVPDAGGCASEENGVLREKHEAVDHSSQHEENEERVSAQKENSLQQNDDDENKIAEKPDWEAEKTTESRNERHLNGTDTSFSLEDLFQLLSSQPENSLEGISLGDIPLPGSISDGMNSSAHYHVNFSQAISQDVNLHEAILLCPNNTFRRDPTARTSQSQEPFLQLNSHTTNPEQTLPGTNLTGFLSPVDNHMRNLTSQDLLYDLDINIFDEINLMSLATEDNFDPIDVSQLFDEPDSDSGLSLDSSHNNTSVIKSNSSHSVCDEGAIGYCTDHESSSHHDLEGAVGGYYPEPSKLCHLDQSDSDFHGDLTFQHVFHNHTYHLQPTAPESTSEPFPWPGKSQKIRSRYLEDTDRNLSRDEQRAKALHIPFSVDEIVGMPVDSFNSMLSRYYLTDLQVSLIRDIRRRGKNKVAAQNCRKRKLDIILNLEDDVCNLQAKKETLKREQAQCNKAINIMKQKLHDLYHDIFSRLRDDQGRPVNPNHYALQCTHDGSILIVPKELVASGHKKETQKGKRK.

The span at 133–150 (ASSTGGAGASVDGGSQAV) shows a compositional bias: low complexity. 2 disordered regions span residues 133-256 (ASST…LNGT) and 330-357 (DPTA…QTLP). 2 stretches are compositionally biased toward basic and acidic residues: residues 193–217 (GVLR…RVSA) and 231–254 (NKIA…RHLN). A compositionally biased stretch (polar residues) spans 333-357 (ARTSQSQEPFLQLNSHTTNPEQTLP). Residues 578–641 (LIRDIRRRGK…NIMKQKLHDL (64 aa)) form the bZIP domain. The segment at 580–599 (RDIRRRGKNKVAAQNCRKRK) is basic motif. Residues 606–620 (LEDDVCNLQAKKETL) form a leucine-zipper region.

Belongs to the bZIP family. CNC subfamily. Heterodimer with MAFG, MAFK and other small MAF proteins that binds to the MAF recognition elements (MARE). As to expression, highly expressed in human placenta and also in B-cell and monocyte cell lines. Low expression in heart, brain, lung, skeletal muscle, kidney and pancreas.

Its subcellular location is the nucleus. In terms of biological role, activates erythroid-specific, globin gene expression. The protein is Nuclear factor erythroid 2-related factor 3 (NFE2L3) of Homo sapiens (Human).